The sequence spans 274 residues: tRNA-cytidine(32) 2-sulfurtransferase (274 aa).

The PP-loop motif signature appears at 40 to 45 (SGGKDS). The [4Fe-4S] cluster site is built by Cys115, Cys118, and Cys206.

It belongs to the TtcA family. Homodimer. Mg(2+) serves as cofactor. It depends on [4Fe-4S] cluster as a cofactor.

The protein localises to the cytoplasm. It catalyses the reaction cytidine(32) in tRNA + S-sulfanyl-L-cysteinyl-[cysteine desulfurase] + AH2 + ATP = 2-thiocytidine(32) in tRNA + L-cysteinyl-[cysteine desulfurase] + A + AMP + diphosphate + H(+). Its pathway is tRNA modification. Its function is as follows. Catalyzes the ATP-dependent 2-thiolation of cytidine in position 32 of tRNA, to form 2-thiocytidine (s(2)C32). The sulfur atoms are provided by the cysteine/cysteine desulfurase (IscS) system. The chain is tRNA-cytidine(32) 2-sulfurtransferase from Pseudomonas fluorescens (strain ATCC BAA-477 / NRRL B-23932 / Pf-5).